The chain runs to 230 residues: 2-C-methyl-D-erythritol 4-phosphate cytidylyltransferase (230 aa).

The protein belongs to the IspD/TarI cytidylyltransferase family. IspD subfamily.

It catalyses the reaction 2-C-methyl-D-erythritol 4-phosphate + CTP + H(+) = 4-CDP-2-C-methyl-D-erythritol + diphosphate. Its pathway is isoprenoid biosynthesis; isopentenyl diphosphate biosynthesis via DXP pathway; isopentenyl diphosphate from 1-deoxy-D-xylulose 5-phosphate: step 2/6. Catalyzes the formation of 4-diphosphocytidyl-2-C-methyl-D-erythritol from CTP and 2-C-methyl-D-erythritol 4-phosphate (MEP). In Laribacter hongkongensis (strain HLHK9), this protein is 2-C-methyl-D-erythritol 4-phosphate cytidylyltransferase.